Consider the following 1005-residue polypeptide: Retinoblastoma-related protein (1005 aa).

Residues 404 to 605 (TPVSTAMTTA…EKGSSMYNSL (202 aa)) are domain A. The tract at residues 404-853 (TPVSTAMTTA…NEIFIPSVKP (450 aa)) is pocket. A spacer region spans residues 606-722 (TIARPNLSNE…HPTRGETCAE (117 aa)). A domain B region spans residues 723–853 (TAVNLFFSKI…NEIFIPSVKP (131 aa)). Over residues 863-873 (VPKNPNNQVSE) the composition is skewed to polar residues. Positions 863 to 899 (VPKNPNNQVSETNKKDESGPCPCPGSPKVSSFPSLPD) are disordered.

This sequence belongs to the retinoblastoma protein (RB) family.

It is found in the nucleus. Its function is as follows. Regulator of biological processes that recruits a histone deacetylase to control gene transcription. May play a role in the entry into mitosis, negatively regulating the cell proliferation. Formation of stable complexes with geminiviridae replication-associated proteins may create a cellular environment which favors viral DNA replication. The chain is Retinoblastoma-related protein (RBR) from Pilosella piloselloides (Glaucous king-devil hawkweed).